Consider the following 255-residue polypeptide: NAD kinase (255 aa).

Asp-44 acts as the Proton acceptor in catalysis. Residues 44 to 45, His-49, 114 to 115, Asp-144, Ala-152, 155 to 160, and Gln-216 each bind NAD(+); these read DG, NE, and SAYNLS.

This sequence belongs to the NAD kinase family. A divalent metal cation serves as cofactor.

The protein localises to the cytoplasm. It catalyses the reaction NAD(+) + ATP = ADP + NADP(+) + H(+). In terms of biological role, involved in the regulation of the intracellular balance of NAD and NADP, and is a key enzyme in the biosynthesis of NADP. Catalyzes specifically the phosphorylation on 2'-hydroxyl of the adenosine moiety of NAD to yield NADP. This chain is NAD kinase, found in Rickettsia prowazekii (strain Madrid E).